The chain runs to 183 residues: Putative manganese efflux pump MntP (183 aa).

The next 6 membrane-spanning stretches (helical) occupy residues 6-26 (LFLIAIALSLDAFGVALCIGL), 40-60 (IYFGFFQFLFAIIGGYAGFLF), 64-84 (IATMPQIVGGVVICIVGIIMI), 101-121 (MNIILGISVSIDAMVVGFTAL), 135-155 (LFIGIVTLFVSILAFITSKYL), and 158-178 (IDVIGKYADYIGGIILIFFGL).

This sequence belongs to the MntP (TC 9.B.29) family.

The protein localises to the cell membrane. Its function is as follows. Probably functions as a manganese efflux pump. The protein is Putative manganese efflux pump MntP of Clostridium tetani (strain Massachusetts / E88).